We begin with the raw amino-acid sequence, 157 residues long: Phosphopantetheine adenylyltransferase (157 aa).

Substrate is bound at residue S8. ATP contacts are provided by residues 8–9 (SF) and H16. K40, T72, and R86 together coordinate substrate. Residues 87–89 (GLR), E97, and 122–128 (YSFLSSS) each bind ATP.

Belongs to the bacterial CoaD family. In terms of assembly, homohexamer. It depends on Mg(2+) as a cofactor.

Its subcellular location is the cytoplasm. The enzyme catalyses (R)-4'-phosphopantetheine + ATP + H(+) = 3'-dephospho-CoA + diphosphate. It participates in cofactor biosynthesis; coenzyme A biosynthesis; CoA from (R)-pantothenate: step 4/5. Reversibly transfers an adenylyl group from ATP to 4'-phosphopantetheine, yielding dephospho-CoA (dPCoA) and pyrophosphate. The chain is Phosphopantetheine adenylyltransferase from Gloeothece citriformis (strain PCC 7424) (Cyanothece sp. (strain PCC 7424)).